A 373-amino-acid chain; its full sequence is Chaperone protein DnaJ (373 aa).

Positions 5 to 70 constitute a J domain; sequence CYYEVLEVSR…EKRSRYDRFG (66 aa). Residues 134 to 212 form a CR-type zinc finger; sequence GTEVELNIPV…CRGAGYVRKQ (79 aa). Zn(2+)-binding residues include cysteine 147, cysteine 150, cysteine 164, cysteine 167, cysteine 186, cysteine 189, cysteine 200, and cysteine 203. CXXCXGXG motif repeat units lie at residues 147–154, 164–171, 186–193, and 200–207; these read CDTCEGSG, CSHCGGRG, CPACNGRG, and CSECRGAG.

The protein belongs to the DnaJ family. As to quaternary structure, homodimer. The cofactor is Zn(2+).

It is found in the cytoplasm. Its function is as follows. Participates actively in the response to hyperosmotic and heat shock by preventing the aggregation of stress-denatured proteins and by disaggregating proteins, also in an autonomous, DnaK-independent fashion. Unfolded proteins bind initially to DnaJ; upon interaction with the DnaJ-bound protein, DnaK hydrolyzes its bound ATP, resulting in the formation of a stable complex. GrpE releases ADP from DnaK; ATP binding to DnaK triggers the release of the substrate protein, thus completing the reaction cycle. Several rounds of ATP-dependent interactions between DnaJ, DnaK and GrpE are required for fully efficient folding. Also involved, together with DnaK and GrpE, in the DNA replication of plasmids through activation of initiation proteins. This Maridesulfovibrio salexigens (strain ATCC 14822 / DSM 2638 / NCIMB 8403 / VKM B-1763) (Desulfovibrio salexigens) protein is Chaperone protein DnaJ.